The chain runs to 543 residues: CTP synthase (543 aa).

Residues 1 to 267 (MKQTKYIFVT…LSPIAEILDL (267 aa)) are amidoligase domain. Residue Ser-15 participates in CTP binding. A UTP-binding site is contributed by Ser-15. Residues 16–21 (SLGKGI) and Asp-73 each bind ATP. The Mg(2+) site is built by Asp-73 and Glu-141. CTP-binding positions include 148 to 150 (DIE), 188 to 193 (KTKPTQ), and Lys-224. Residues 188–193 (KTKPTQ) and Lys-224 contribute to the UTP site. The Glutamine amidotransferase type-1 domain occupies 292-543 (KIAFVGKYVD…IKAAINYEDN (252 aa)). Gly-354 contributes to the L-glutamine binding site. The active-site Nucleophile; for glutamine hydrolysis is the Cys-381. L-glutamine is bound by residues 382–385 (LGMQ), Glu-405, and Arg-473. Active-site residues include His-516 and Glu-518.

Belongs to the CTP synthase family. Homotetramer.

It carries out the reaction UTP + L-glutamine + ATP + H2O = CTP + L-glutamate + ADP + phosphate + 2 H(+). It catalyses the reaction L-glutamine + H2O = L-glutamate + NH4(+). The enzyme catalyses UTP + NH4(+) + ATP = CTP + ADP + phosphate + 2 H(+). The protein operates within pyrimidine metabolism; CTP biosynthesis via de novo pathway; CTP from UDP: step 2/2. Allosterically activated by GTP, when glutamine is the substrate; GTP has no effect on the reaction when ammonia is the substrate. The allosteric effector GTP functions by stabilizing the protein conformation that binds the tetrahedral intermediate(s) formed during glutamine hydrolysis. Inhibited by the product CTP, via allosteric rather than competitive inhibition. In terms of biological role, catalyzes the ATP-dependent amination of UTP to CTP with either L-glutamine or ammonia as the source of nitrogen. Regulates intracellular CTP levels through interactions with the four ribonucleotide triphosphates. The protein is CTP synthase of Campylobacter jejuni subsp. jejuni serotype O:23/36 (strain 81-176).